Consider the following 458-residue polypeptide: UDP-N-acetylmuramate--L-alanine ligase (458 aa).

Residue 115–121 (GSHGKTT) coordinates ATP.

This sequence belongs to the MurCDEF family.

The protein resides in the cytoplasm. It carries out the reaction UDP-N-acetyl-alpha-D-muramate + L-alanine + ATP = UDP-N-acetyl-alpha-D-muramoyl-L-alanine + ADP + phosphate + H(+). It functions in the pathway cell wall biogenesis; peptidoglycan biosynthesis. In terms of biological role, cell wall formation. This is UDP-N-acetylmuramate--L-alanine ligase from Anaeromyxobacter dehalogenans (strain 2CP-C).